A 270-amino-acid chain; its full sequence is MAFSRTHSLLARAGSTSTYKRVWRYWYPLMTRGLGNDEIVFINWAYEEDPPMDLPLEASDEPNRAHINLYHRTATQVDLGGKQVLEVSCGHGGGASYLTRTLHPASYTGLDLNQAGIKLCKKRHRLPGLDFVRGDAENLPFDDESFDVVLNVEASHCYPHFRRFLAEVVRVLRPGGYFPYADLRPNNEIAAWEADLAATPLRQLSQRQINAEVLRGIGNNSQKSRDLVDRHLPAFLRFAGREFIGVQGTQLSRYLEGGELSYRMYCFTKD.

It belongs to the methyltransferase superfamily. Phthiotriol/phenolphthiotriol dimycocerosates methyltransferase family.

Functionally, catalyzes the methylation of the lipid moiety of the intermediate compounds phthiotriol and glycosylated phenolphthiotriol dimycoserosates to form phthiocerol dimycocerosates (DIM A) and glycosylated phenolphthiocerol dimycocerosates (PGL). The chain is Phthiotriol/phenolphthiotriol dimycocerosates methyltransferase from Mycobacterium bovis (strain ATCC BAA-935 / AF2122/97).